The sequence spans 502 residues: Lysine--tRNA ligase (502 aa).

Mg(2+) contacts are provided by E403 and E410.

Belongs to the class-II aminoacyl-tRNA synthetase family. Homodimer. It depends on Mg(2+) as a cofactor.

It localises to the cytoplasm. The catalysed reaction is tRNA(Lys) + L-lysine + ATP = L-lysyl-tRNA(Lys) + AMP + diphosphate. This is Lysine--tRNA ligase from Synechococcus sp. (strain CC9902).